Here is a 343-residue protein sequence, read N- to C-terminus: Probable 4-hydroxy-tetrahydrodipicolinate reductase 1, chloroplastic (343 aa).

The transit peptide at 1–14 (MLASTFATHPAAAA) directs the protein to the chloroplast. Residues 167–169 (GTT) and 190–193 (SPQM) contribute to the NAD(+) site. The active-site Proton donor/acceptor is histidine 226. Lysine 230 acts as the Proton donor in catalysis. Residue 235 to 236 (GT) participates in (S)-2,3,4,5-tetrahydrodipicolinate binding.

This sequence belongs to the DapB family.

Its subcellular location is the plastid. The protein localises to the chloroplast. It catalyses the reaction (S)-2,3,4,5-tetrahydrodipicolinate + NAD(+) + H2O = (2S,4S)-4-hydroxy-2,3,4,5-tetrahydrodipicolinate + NADH + H(+). It carries out the reaction (S)-2,3,4,5-tetrahydrodipicolinate + NADP(+) + H2O = (2S,4S)-4-hydroxy-2,3,4,5-tetrahydrodipicolinate + NADPH + H(+). The protein operates within amino-acid biosynthesis; L-lysine biosynthesis via DAP pathway; (S)-tetrahydrodipicolinate from L-aspartate: step 4/4. Its function is as follows. Catalyzes the conversion of 4-hydroxy-tetrahydrodipicolinate (HTPA) to tetrahydrodipicolinate. This is Probable 4-hydroxy-tetrahydrodipicolinate reductase 1, chloroplastic (DAPB1) from Oryza sativa subsp. japonica (Rice).